A 165-amino-acid polypeptide reads, in one-letter code: Probable velvet family sexual development regulator CC1G_12219 (165 aa).

Residues 1 to 121 form the Velvet domain; it reads MSNTDAQTSF…SVWGAQVNVR (121 aa).

Belongs to the velvet family.

It is found in the nucleus. Velvet-domain-containing protein that probably acts as a positive regulator of sexual development. In Coprinopsis cinerea (strain Okayama-7 / 130 / ATCC MYA-4618 / FGSC 9003) (Inky cap fungus), this protein is Probable velvet family sexual development regulator CC1G_12219.